The following is a 350-amino-acid chain: 2-oxoglutarate-dependent ethylene/succinate-forming enzyme (350 aa).

Positions 166-286 constitute a Fe2OG dioxygenase domain; it reads GWHHMRVLRF…RFACAYFHEP (121 aa). Positions 189 and 268 each coordinate Fe cation.

This sequence belongs to the iron/ascorbate-dependent oxidoreductase family. In terms of assembly, monomer. Requires Fe(2+) as cofactor.

The enzyme catalyses 2-oxoglutarate + O2 + 2 H(+) = ethene + 3 CO2 + H2O. It carries out the reaction L-arginine + 2-oxoglutarate + O2 = guanidine + L-glutamate 5-semialdehyde + succinate + CO2. Its pathway is alkene biosynthesis; ethylene biosynthesis via 2-oxoglutarate. With respect to regulation, activated by catalase. Inhibited by chelating reagents such as EDTA and Tiron (4,5-dihydroxy-1,3-benzene disulphonic acid), and by DTNB (5,5'-dithio-bis-2-nitrobenzoate) and hydrogen peroxide. In terms of biological role, simultaneously catalyzes two reactions, namely formation of ethylene and of succinate from 2-oxoglutarate, with a molar ratio of 2:1. This Pseudomonas savastanoi pv. phaseolicola (Pseudomonas syringae pv. phaseolicola) protein is 2-oxoglutarate-dependent ethylene/succinate-forming enzyme (efe).